Reading from the N-terminus, the 300-residue chain is Endonuclease III-like protein 1 (300 aa).

The N-terminal 19 residues, Met-1–Ala-19, are a transit peptide targeting the mitochondrion. Positions Met-1–His-53 are disordered. Residues Gly-22–Arg-37 show a composition bias toward basic and acidic residues. The span at Lys-38–Lys-51 shows a compositional bias: basic residues. Residues Arg-187 to His-211 form the HhH domain. Lys-208 (nucleophile; for N-glycosylase activity) is an active-site residue. Positions 278, 285, 288, and 294 each coordinate [4Fe-4S] cluster.

The protein belongs to the Nth/MutY family. In terms of assembly, interacts with YBX1. Interacts with ERCC5/XPG; the interaction stimulates NTHL1 activity and NTHL1 binding to its DNA substrate. It depends on [4Fe-4S] cluster as a cofactor. Post-translationally, ubiquitinated by TRIM26; leading to proteasomal degradation. As to expression, widely expressed.

It is found in the nucleus. It localises to the mitochondrion. The enzyme catalyses 2'-deoxyribonucleotide-(2'-deoxyribose 5'-phosphate)-2'-deoxyribonucleotide-DNA = a 3'-end 2'-deoxyribonucleotide-(2,3-dehydro-2,3-deoxyribose 5'-phosphate)-DNA + a 5'-end 5'-phospho-2'-deoxyribonucleoside-DNA + H(+). Bifunctional DNA N-glycosylase with associated apurinic/apyrimidinic (AP) lyase function that catalyzes the first step in base excision repair (BER), the primary repair pathway for the repair of oxidative DNA damage. The DNA N-glycosylase activity releases the damaged DNA base from DNA by cleaving the N-glycosidic bond, leaving an AP site. The AP lyase activity cleaves the phosphodiester bond 3' to the AP site by a beta-elimination. Primarily recognizes and repairs oxidative base damage of pyrimidines. This is Endonuclease III-like protein 1 (Nthl1) from Mus musculus (Mouse).